A 468-amino-acid chain; its full sequence is ATP synthase subunit beta (468 aa).

ATP is bound at residue 148–155 (GGAGVGKT).

The protein belongs to the ATPase alpha/beta chains family. F-type ATPases have 2 components, CF(1) - the catalytic core - and CF(0) - the membrane proton channel. CF(1) has five subunits: alpha(3), beta(3), gamma(1), delta(1), epsilon(1). CF(0) has three main subunits: a(1), b(2) and c(9-12). The alpha and beta chains form an alternating ring which encloses part of the gamma chain. CF(1) is attached to CF(0) by a central stalk formed by the gamma and epsilon chains, while a peripheral stalk is formed by the delta and b chains.

It localises to the cell membrane. The catalysed reaction is ATP + H2O + 4 H(+)(in) = ADP + phosphate + 5 H(+)(out). Its function is as follows. Produces ATP from ADP in the presence of a proton gradient across the membrane. The catalytic sites are hosted primarily by the beta subunits. The polypeptide is ATP synthase subunit beta (Stenotrophomonas maltophilia (strain K279a)).